Reading from the N-terminus, the 196-residue chain is Serine recombinase PinR (196 aa).

The 141-residue stretch at 3–143 folds into the Resolvase/invertase-type recombinase catalytic domain; sequence RIFAYCRIST…SGIVRARGAG (141 aa). The active-site O-(5'-phospho-DNA)-serine intermediate is the Ser-11.

This sequence belongs to the site-specific recombinase resolvase family.

The polypeptide is Serine recombinase PinR (pinR) (Escherichia coli (strain K12)).